A 62-amino-acid polypeptide reads, in one-letter code: Photosystem II reaction center protein Z (62 aa).

Helical transmembrane passes span 8–28 (AVFA…VVFA) and 41–61 (FSGT…NSLI).

This sequence belongs to the PsbZ family. As to quaternary structure, PSII is composed of 1 copy each of membrane proteins PsbA, PsbB, PsbC, PsbD, PsbE, PsbF, PsbH, PsbI, PsbJ, PsbK, PsbL, PsbM, PsbT, PsbY, PsbZ, Psb30/Ycf12, at least 3 peripheral proteins of the oxygen-evolving complex and a large number of cofactors. It forms dimeric complexes.

The protein localises to the plastid. It localises to the chloroplast thylakoid membrane. Functionally, may control the interaction of photosystem II (PSII) cores with the light-harvesting antenna, regulates electron flow through the 2 photosystem reaction centers. PSII is a light-driven water plastoquinone oxidoreductase, using light energy to abstract electrons from H(2)O, generating a proton gradient subsequently used for ATP formation. In Cucumis sativus (Cucumber), this protein is Photosystem II reaction center protein Z.